Here is a 161-residue protein sequence, read N- to C-terminus: Urease accessory protein UreE (161 aa).

It belongs to the UreE family.

It localises to the cytoplasm. Involved in urease metallocenter assembly. Binds nickel. Probably functions as a nickel donor during metallocenter assembly. The sequence is that of Urease accessory protein UreE from Pseudarthrobacter chlorophenolicus (strain ATCC 700700 / DSM 12829 / CIP 107037 / JCM 12360 / KCTC 9906 / NCIMB 13794 / A6) (Arthrobacter chlorophenolicus).